A 333-amino-acid chain; its full sequence is Minor fimbrium tip subunit MfA4 (333 aa).

A signal peptide spans 1–18; it reads MKKYLLYASLLTSVLLFS. Cysteine 19 carries N-palmitoyl cysteine lipidation. Cysteine 19 carries S-diacylglycerol cysteine lipidation. Residues 19–53 constitute a propeptide that is removed on maturation; sequence CSKNNPSEPVEDRSIEISIRVDDFTKTGETVRYER.

Belongs to the bacteroidetes fimbrillin superfamily. FimA/Mfa1 family. In terms of assembly, component of the fimbrium tip. Minor fimbriae are composed of a structural subunit, most often Mfa1, and the accessory subunits Mfa3, Mfa4 and Mfa5. Mfa4 is required for Mfa3 and Mfa5 insertion into the fimbrium. Fimbrium assembly occurs by linear, head-to-tail oligomerization of fimbrial subunits. This is mediated via insertion of a C-terminal beta-strand from one subunit into a groove in the N-terminal domain of the following subunit.

The protein localises to the fimbrium. It is found in the cell outer membrane. Tip subunit of the minor fimbriae. These filamentous pili are attached to the cell surface; they mediate biofilm formation, adhesion onto host cells and onto other bacteria that are part of the oral microbiome. They play an important role in invasion of periodontal tissues and are recognized as major virulence factors. The protein is Minor fimbrium tip subunit MfA4 of Porphyromonas gingivalis (strain ATCC 33277 / DSM 20709 / CIP 103683 / JCM 12257 / NCTC 11834 / 2561).